We begin with the raw amino-acid sequence, 248 residues long: Methyl-coenzyme M reductase subunit gamma (248 aa).

Arg-121 lines the coenzyme M pocket.

Belongs to the methyl-coenzyme M reductase gamma subunit family. In terms of assembly, MCR is a hexamer of two alpha, two beta, and two gamma chains, forming a dimer of heterotrimers. It depends on coenzyme F430 as a cofactor.

It is found in the cytoplasm. The catalysed reaction is coenzyme B + methyl-coenzyme M = methane + coenzyme M-coenzyme B heterodisulfide. The protein operates within one-carbon metabolism; methyl-coenzyme M reduction; methane from methyl-coenzyme M: step 1/1. Its function is as follows. Component of the methyl-coenzyme M reductase (MCR) I that catalyzes the reductive cleavage of methyl-coenzyme M (CoM-S-CH3 or 2-(methylthio)ethanesulfonate) using coenzyme B (CoB or 7-mercaptoheptanoylthreonine phosphate) as reductant which results in the production of methane and the mixed heterodisulfide of CoB and CoM (CoM-S-S-CoB). This is the final step in methanogenesis. The sequence is that of Methyl-coenzyme M reductase subunit gamma (mcrG) from Methanosarcina barkeri (strain Fusaro / DSM 804).